The sequence spans 295 residues: G1/S-specific cyclin-D1 (295 aa).

The 125-residue stretch at 28 to 152 (LRAMLKTEET…LLVNKLKWNL (125 aa)) folds into the Cyclin N-terminal domain. Lys-269 is covalently cross-linked (Glycyl lysine isopeptide (Lys-Gly) (interchain with G-Cter in ubiquitin)). The disordered stretch occupies residues 269-295 (KATEEEGEVEEEAGLACTPTDVRDVDI). At Thr-286 the chain carries Phosphothreonine.

This sequence belongs to the cyclin family. Cyclin D subfamily. In terms of assembly, interacts with either CDK4 or CDK6 protein kinase to form a serine/threonine kinase holoenzyme complex. The cyclin subunit imparts substrate specificity to the complex. Component of the ternary complex CCND1/CDK4/CDKN1B required for nuclear translocation and modulation of CDK4-mediated kinase activity. Interacts directly with CDKN1B. Can form similar complexes with either CDKN1A or CDKN2A. Interacts with UHRF2; the interaction ubiquitinates CCND1 and appears to occur independently of phosphorylation. Interacts with USP2. Interacts (via cyclin N-terminal domain) with INSM1 (via N-terminal region); the interaction competes with the binding of CCND1 to CDK4 during cell cycle progression and inhibits CDK4 activity. Interacts with CDK4; the interaction is prevented with the binding of CCND1 to INSM1 during cell cycle progression. Post-translationally, phosphorylation at Thr-286 by MAP kinases is required for ubiquitination and degradation by the DCX(AMBRA1) complex. It also plays an essential role for recognition by the FBXO31 component of SCF (SKP1-cullin-F-box) protein ligase complex following DNA damage. Ubiquitinated at Lys-269 by the DCX(AMBRA1) complex during the transition from G1 to S cell phase, leading to its degradation: ubiquitination is dependent on Thr-286 phosphorylation. The DCX(AMBRA1) complex represents the major regulator of CCND1 stability during the G1/S transition. Also ubiquitinated by the SCF(FBXO4) and Cul7-RING(FBXW8) ubiquitin-protein ligase complexes. Following DNA damage it is ubiquitinated by the SCF(FBXO31) protein ligase complex. SCF(FBXO31) ubiquitination is dependent on Thr-286 phosphorylation. Ubiquitinated also by UHRF2 apparently in a phosphorylation-independent manner. Ubiquitination leads to its degradation and G1 arrest. Deubiquitinated by USP2; leading to its stabilization.

The protein resides in the nucleus. Its subcellular location is the cytoplasm. It is found in the nucleus membrane. Regulatory component of the cyclin D1-CDK4 (DC) complex that phosphorylates and inhibits members of the retinoblastoma (RB) protein family including RB1 and regulates the cell-cycle during G(1)/S transition. Phosphorylation of RB1 allows dissociation of the transcription factor E2F from the RB/E2F complex and the subsequent transcription of E2F target genes which are responsible for the progression through the G(1) phase. Hypophosphorylates RB1 in early G(1) phase. Cyclin D-CDK4 complexes are major integrators of various mitogenenic and antimitogenic signals. Also a substrate for SMAD3, phosphorylating SMAD3 in a cell-cycle-dependent manner and repressing its transcriptional activity. Component of the ternary complex, cyclin D1/CDK4/CDKN1B, required for nuclear translocation and activity of the cyclin D-CDK4 complex. Exhibits transcriptional corepressor activity with INSM1 on the NEUROD1 and INS promoters in a cell cycle-independent manner. This Rattus norvegicus (Rat) protein is G1/S-specific cyclin-D1 (Ccnd1).